The chain runs to 230 residues: Ion-translocating oxidoreductase complex subunit E (230 aa).

A run of 6 helical transmembrane segments spans residues 11–31, 39–59, 69–89, 93–113, 132–152, and 182–202; these read GMWANNPALVQLLGLCPLLAV, LGLGIATLLVLVGSNVSVSLV, IPVFVMIIASLVTCVQLLMNA, GLYLSLGIFIPLIVTNCIIIG, FWMGLGMTSVLVVLGAMREII, and SFLLALLPPGAFIGVGFLIAL.

It belongs to the NqrDE/RnfAE family. In terms of assembly, the complex is composed of six subunits: RnfA, RnfB, RnfC, RnfD, RnfE and RnfG.

It is found in the cell inner membrane. Functionally, part of a membrane-bound complex that couples electron transfer with translocation of ions across the membrane. This chain is Ion-translocating oxidoreductase complex subunit E, found in Vibrio atlanticus (strain LGP32) (Vibrio splendidus (strain Mel32)).